The chain runs to 429 residues: Cyclin-B2-3 (429 aa).

Over residues 86 to 101 (ADHKPHIRDEETKKPD) the composition is skewed to basic and acidic residues. The interval 86-109 (ADHKPHIRDEETKKPDSVSSEEPE) is disordered.

This sequence belongs to the cyclin family. Cyclin AB subfamily.

This chain is Cyclin-B2-3 (CYCB2-3), found in Arabidopsis thaliana (Mouse-ear cress).